The chain runs to 200 residues: Large ribosomal subunit protein bL25 (200 aa).

The protein belongs to the bacterial ribosomal protein bL25 family. CTC subfamily. In terms of assembly, part of the 50S ribosomal subunit; part of the 5S rRNA/L5/L18/L25 subcomplex. Contacts the 5S rRNA. Binds to the 5S rRNA independently of L5 and L18.

In terms of biological role, this is one of the proteins that binds to the 5S RNA in the ribosome where it forms part of the central protuberance. This chain is Large ribosomal subunit protein bL25, found in Pseudomonas fluorescens (strain SBW25).